Reading from the N-terminus, the 614-residue chain is Elongation factor 4 (614 aa).

The tr-type G domain maps to alanine 10 to valine 192. Residues aspartate 22 to threonine 27 and asparagine 139 to aspartate 142 contribute to the GTP site.

This sequence belongs to the TRAFAC class translation factor GTPase superfamily. Classic translation factor GTPase family. LepA subfamily.

The protein localises to the cell membrane. It catalyses the reaction GTP + H2O = GDP + phosphate + H(+). Required for accurate and efficient protein synthesis under certain stress conditions. May act as a fidelity factor of the translation reaction, by catalyzing a one-codon backward translocation of tRNAs on improperly translocated ribosomes. Back-translocation proceeds from a post-translocation (POST) complex to a pre-translocation (PRE) complex, thus giving elongation factor G a second chance to translocate the tRNAs correctly. Binds to ribosomes in a GTP-dependent manner. This chain is Elongation factor 4, found in Thermobifida fusca (strain YX).